The chain runs to 358 residues: Peptide chain release factor 1 (358 aa).

An N5-methylglutamine modification is found at Gln-233.

Belongs to the prokaryotic/mitochondrial release factor family. Methylated by PrmC. Methylation increases the termination efficiency of RF1.

Its subcellular location is the cytoplasm. In terms of biological role, peptide chain release factor 1 directs the termination of translation in response to the peptide chain termination codons UAG and UAA. The polypeptide is Peptide chain release factor 1 (Staphylococcus carnosus (strain TM300)).